A 195-amino-acid polypeptide reads, in one-letter code: Imidazoleglycerol-phosphate dehydratase (195 aa).

It belongs to the imidazoleglycerol-phosphate dehydratase family.

It localises to the cytoplasm. The enzyme catalyses D-erythro-1-(imidazol-4-yl)glycerol 3-phosphate = 3-(imidazol-4-yl)-2-oxopropyl phosphate + H2O. It functions in the pathway amino-acid biosynthesis; L-histidine biosynthesis; L-histidine from 5-phospho-alpha-D-ribose 1-diphosphate: step 6/9. In Bordetella avium (strain 197N), this protein is Imidazoleglycerol-phosphate dehydratase.